Here is a 187-residue protein sequence, read N- to C-terminus: GTP cyclohydrolase 1 (187 aa).

Zn(2+) is bound by residues C79, H82, and C150.

The protein belongs to the GTP cyclohydrolase I family. In terms of assembly, toroid-shaped homodecamer, composed of two pentamers of five dimers.

It catalyses the reaction GTP + H2O = 7,8-dihydroneopterin 3'-triphosphate + formate + H(+). It participates in cofactor biosynthesis; 7,8-dihydroneopterin triphosphate biosynthesis; 7,8-dihydroneopterin triphosphate from GTP: step 1/1. The polypeptide is GTP cyclohydrolase 1 (Fusobacterium nucleatum subsp. nucleatum (strain ATCC 25586 / DSM 15643 / BCRC 10681 / CIP 101130 / JCM 8532 / KCTC 2640 / LMG 13131 / VPI 4355)).